The chain runs to 87 residues: Mitochondrial import inner membrane translocase subunit TIM9 (87 aa).

Positions 35 to 59 (CFMSCVDDFTSKAISNRESGCINRC) match the Twin CX3C motif motif. Intrachain disulfides connect Cys35/Cys59 and Cys39/Cys55.

The protein belongs to the small Tim family. As to quaternary structure, heterohexamer; composed of 3 copies of TIM9 and 3 copies of TIM10, named soluble 70 kDa complex. Associates with the TIM22 complex, whose core is composed of TIM22 and TIM54. Interacts with the transmembrane regions of multi-pass transmembrane proteins in transit.

The protein localises to the mitochondrion inner membrane. Functionally, mitochondrial intermembrane chaperone that participates in the import and insertion of multi-pass transmembrane proteins into the mitochondrial inner membrane. Also required for the transfer of beta-barrel precursors from the TOM complex to the sorting and assembly machinery (SAM complex) of the outer membrane. Acts as a chaperone-like protein that protects the hydrophobic precursors from aggregation and guide them through the mitochondrial intermembrane space. The sequence is that of Mitochondrial import inner membrane translocase subunit TIM9 (TIM9) from Gibberella zeae (strain ATCC MYA-4620 / CBS 123657 / FGSC 9075 / NRRL 31084 / PH-1) (Wheat head blight fungus).